The primary structure comprises 505 residues: Deoxyguanosinetriphosphate triphosphohydrolase (505 aa).

Residues 66 to 273 enclose the HD domain; the sequence is RLTHSMEVQQ…MEAADDISYC (208 aa).

The protein belongs to the dGTPase family. Type 1 subfamily. In terms of assembly, homotetramer. Mg(2+) is required as a cofactor.

It catalyses the reaction dGTP + H2O = 2'-deoxyguanosine + triphosphate + H(+). DGTPase preferentially hydrolyzes dGTP over the other canonical NTPs. The chain is Deoxyguanosinetriphosphate triphosphohydrolase from Escherichia coli O17:K52:H18 (strain UMN026 / ExPEC).